We begin with the raw amino-acid sequence, 117 residues long: Large ribosomal subunit protein bL19 (117 aa).

The protein belongs to the bacterial ribosomal protein bL19 family.

This protein is located at the 30S-50S ribosomal subunit interface and may play a role in the structure and function of the aminoacyl-tRNA binding site. The polypeptide is Large ribosomal subunit protein bL19 (Shewanella woodyi (strain ATCC 51908 / MS32)).